A 166-amino-acid chain; its full sequence is MVVAGIDPGITHLGLGVVAVEGKGALKARLLHGEVVKTSPQEPAKERVGRIHARVLEVLHRFRPEAVAVEEQFFYRQNELAYKVGWALGAVLVAAFEAGVPVYAYGPMQVKQALAGHGHAAKEEVALMVRGILGLKEAPRPSHLADALAIALTHAFYARMGTAKPL.

Active-site residues include D7, E70, and H143. The Mg(2+) site is built by D7, E70, and H143.

The protein belongs to the RuvC family. As to quaternary structure, homodimer which binds Holliday junction (HJ) DNA. The HJ becomes 2-fold symmetrical on binding to RuvC with unstacked arms; it has a different conformation from HJ DNA in complex with RuvA. In the full resolvosome a probable DNA-RuvA(4)-RuvB(12)-RuvC(2) complex forms which resolves the HJ. It depends on Mg(2+) as a cofactor.

It is found in the cytoplasm. It catalyses the reaction Endonucleolytic cleavage at a junction such as a reciprocal single-stranded crossover between two homologous DNA duplexes (Holliday junction).. Functionally, the RuvA-RuvB-RuvC complex processes Holliday junction (HJ) DNA during genetic recombination and DNA repair. Endonuclease that resolves HJ intermediates. Cleaves cruciform DNA by making single-stranded nicks across the HJ at symmetrical positions within the homologous arms, yielding a 5'-phosphate and a 3'-hydroxyl group; requires a central core of homology in the junction. The consensus cleavage sequence is 5'-(A/T)TT(C/G)-3'. Cleavage occurs on the 3'-side of the TT dinucleotide at the point of strand exchange. HJ branch migration catalyzed by RuvA-RuvB allows RuvC to scan DNA until it finds its consensus sequence, where it cleaves and resolves the cruciform DNA. This is Crossover junction endodeoxyribonuclease RuvC from Thermus thermophilus (strain ATCC BAA-163 / DSM 7039 / HB27).